The following is a 172-amino-acid chain: uncharacterized protein (172 aa).

Transmembrane regions (helical) follow at residues 16-36 (IMIVIAIIITIGSFLFIAYLI), 68-88 (SFLIISLLCFYFGMLYIAGEL), and 89-109 (VISHILFIAICWIVVFLYIII).

The protein resides in the cell membrane. This is an uncharacterized protein from Methanocaldococcus jannaschii (strain ATCC 43067 / DSM 2661 / JAL-1 / JCM 10045 / NBRC 100440) (Methanococcus jannaschii).